The following is a 243-amino-acid chain: MLPFWIALQFLGSLPIRLPGMPRPEELGRSLLFYPLVGVVFGMLLLGFSALLSGTPLMLHAALVLSAWVLLSGGLHLDGLADSADAWLGGFGDRERTLQIMKDPRSGPIAVVTLVLVLLLKFAAILALIESHSSIGLLLAPVIGRAAMLGLFLGTPYVRSGGLGQALADHLPRGPGRKVLAATAIACVLLAGWSGVAVLLVCAVCFFWLRQLMMRRLGGCTGDTAGALLELLELAVLLTLALL.

Transmembrane regions (helical) follow at residues 31-51 (LLFY…FSAL), 57-77 (LMLH…GLHL), 109-129 (IAVV…LALI), 135-155 (IGLL…FLGT), and 188-208 (VLLA…CFFW).

It belongs to the CobS family. Mg(2+) is required as a cofactor.

Its subcellular location is the cell inner membrane. It carries out the reaction alpha-ribazole + adenosylcob(III)inamide-GDP = adenosylcob(III)alamin + GMP + H(+). The enzyme catalyses alpha-ribazole 5'-phosphate + adenosylcob(III)inamide-GDP = adenosylcob(III)alamin 5'-phosphate + GMP + H(+). Its pathway is cofactor biosynthesis; adenosylcobalamin biosynthesis; adenosylcobalamin from cob(II)yrinate a,c-diamide: step 7/7. Functionally, joins adenosylcobinamide-GDP and alpha-ribazole to generate adenosylcobalamin (Ado-cobalamin). Also synthesizes adenosylcobalamin 5'-phosphate from adenosylcobinamide-GDP and alpha-ribazole 5'-phosphate. The chain is Adenosylcobinamide-GDP ribazoletransferase from Pseudomonas savastanoi pv. phaseolicola (strain 1448A / Race 6) (Pseudomonas syringae pv. phaseolicola (strain 1448A / Race 6)).